Consider the following 1119-residue polypeptide: DNA-directed RNA polymerase subunit beta (1119 aa).

The protein belongs to the RNA polymerase beta chain family. As to quaternary structure, the RNAP catalytic core consists of 2 alpha, 1 beta, 1 beta' and 1 omega subunit. When a sigma factor is associated with the core the holoenzyme is formed, which can initiate transcription.

It catalyses the reaction RNA(n) + a ribonucleoside 5'-triphosphate = RNA(n+1) + diphosphate. Its function is as follows. DNA-dependent RNA polymerase catalyzes the transcription of DNA into RNA using the four ribonucleoside triphosphates as substrates. The protein is DNA-directed RNA polymerase subunit beta of Thermus thermophilus (strain ATCC BAA-163 / DSM 7039 / HB27).